The following is an 81-amino-acid chain: Short neurotoxin 2 (81 aa).

The first 21 residues, 1–21 (MKTLLLTLVVVTIVCLDLGYT), serve as a signal peptide directing secretion. 4 disulfides stabilise this stretch: cysteine 24–cysteine 43, cysteine 38–cysteine 60, cysteine 62–cysteine 73, and cysteine 74–cysteine 79.

The protein belongs to the three-finger toxin family. Short-chain subfamily. Type I alpha-neurotoxin sub-subfamily. Expressed by the venom gland.

The protein resides in the secreted. In terms of biological role, binds to muscle nicotinic acetylcholine receptor (nAChR) and inhibit acetylcholine from binding to the receptor, thereby impairing neuromuscular transmission. This is Short neurotoxin 2 from Cryptophis nigrescens (Eastern small-eyed snake).